The following is a 176-amino-acid chain: Large ribosomal subunit protein uL10 (176 aa).

It belongs to the universal ribosomal protein uL10 family. In terms of assembly, part of the ribosomal stalk of the 50S ribosomal subunit. The N-terminus interacts with L11 and the large rRNA to form the base of the stalk. The C-terminus forms an elongated spine to which L12 dimers bind in a sequential fashion forming a multimeric L10(L12)X complex.

Its function is as follows. Forms part of the ribosomal stalk, playing a central role in the interaction of the ribosome with GTP-bound translation factors. The polypeptide is Large ribosomal subunit protein uL10 (rplJ) (Streptomyces coelicolor (strain ATCC BAA-471 / A3(2) / M145)).